The following is a 1752-amino-acid chain: Serine protease/ABC transporter B family protein tagA (1752 aa).

Positions 1 to 24 (MNKKLFIFGLSLFLFLFIFNLSLS) are cleaved as a signal peptide. An N-linked (GlcNAc...) asparagine glycan is attached at N20. The 417-residue stretch at 280–696 (HYSIQSGSAS…FGNIQLSKLI (417 aa)) folds into the Peptidase S8 domain. Active-site charge relay system residues include D312 and H352. Residues N400 and N557 are each glycosylated (N-linked (GlcNAc...) asparagine). Catalysis depends on S625, which acts as the Charge relay system. Residues N653, N785, and N823 are each glycosylated (N-linked (GlcNAc...) asparagine). The chain crosses the membrane as a helical span at residues 909–929 (IVLLGIFGIIIVGAVIFVLVC). Positions 946 to 1032 (DKGGDGNSIR…QNNSPQYDED (87 aa)) are disordered. Over residues 962–994 (NNNNNNNNNNNNNNNNNNNNNNNNNNNNNNNNN) the composition is skewed to low complexity. N993 carries an N-linked (GlcNAc...) asparagine glycan. Residues 995–1004 (SNGKQSNIEL) show a composition bias toward polar residues. Positions 1013–1028 (GTPNGDDQQQQNNSPQ) are enriched in low complexity. The next 6 helical transmembrane spans lie at 1058 to 1078 (ILGL…AVPL), 1102 to 1122 (FALI…LLAL), 1174 to 1194 (IPHM…LFII), 1200 to 1220 (LVVL…GGYI), 1285 to 1305 (TSGI…SSLV), and 1315 to 1335 (LIAF…VASL). Positions 1059–1341 (LGLALFLSFI…VASLYTTYKS (283 aa)) constitute an ABC transmembrane type-1 domain. Residues 1374-1610 (IQFNKVSFAY…KGMFYDFVQI (237 aa)) enclose the ABC transporter domain. 1409–1416 (GPSGGGKS) serves as a coordination point for ATP. Positions 1621 to 1686 (IQLPSNSRNT…SRSPPPMWRQ (66 aa)) are disordered. Residues 1631 to 1642 (RNADKLRNRSET) are compositionally biased toward basic and acidic residues. Residues N1638, N1670, and N1694 are each glycosylated (N-linked (GlcNAc...) asparagine).

This sequence in the C-terminal section; belongs to the ABC transporter superfamily. ABCB family. Multidrug resistance exporter (TC 3.A.1.201) subfamily. It in the N-terminal section; belongs to the peptidase S8 family.

The protein resides in the membrane. Its function is as follows. Required for a general cell fate determination at the onset of development. Required for the specification of an initial population of prespore cells in which tagA is expressed. Required for normal SDF-2 signaling during spore encapsulation. The protein is Serine protease/ABC transporter B family protein tagA (tagA) of Dictyostelium discoideum (Social amoeba).